We begin with the raw amino-acid sequence, 158 residues long: Endolysin (158 aa).

Glu19 is an active-site residue.

Belongs to the glycosyl hydrolase 24 family. In terms of assembly, monomer.

It is found in the host cytoplasm. The enzyme catalyses Endolytic cleavage of the (1-&gt;4)-beta-glycosidic linkage between N-acetylmuramic acid (MurNAc) and N-acetylglucosamine (GlcNAc) residues in peptidoglycan with concomitant formation of a 1,6-anhydrobond in the MurNAc residue.. Its activity is regulated as follows. Inactivated by zinc. In terms of biological role, endolysin with transglycosylase activity that degrades host peptidoglycans and participates with the holin and spanin proteins in the sequential events which lead to the programmed host cell lysis releasing the mature viral particles. Once the holin has permeabilized the host cell membrane, the endolysin can reach the periplasm and break down the peptidoglycan layer. The sequence is that of Endolysin (R) from Escherichia coli (Bacteriophage lambda).